The following is a 366-amino-acid chain: Ribosomal RNA large subunit methyltransferase M (366 aa).

Residues serine 188, 221–224 (CPGG), aspartate 240, aspartate 260, and aspartate 277 contribute to the S-adenosyl-L-methionine site. Lysine 306 functions as the Proton acceptor in the catalytic mechanism.

The protein belongs to the class I-like SAM-binding methyltransferase superfamily. RNA methyltransferase RlmE family. RlmM subfamily. As to quaternary structure, monomer.

Its subcellular location is the cytoplasm. It carries out the reaction cytidine(2498) in 23S rRNA + S-adenosyl-L-methionine = 2'-O-methylcytidine(2498) in 23S rRNA + S-adenosyl-L-homocysteine + H(+). Catalyzes the 2'-O-methylation at nucleotide C2498 in 23S rRNA. The chain is Ribosomal RNA large subunit methyltransferase M from Salmonella paratyphi C (strain RKS4594).